A 432-amino-acid polypeptide reads, in one-letter code: MQVTVETLEGLERRLNITVPAANIEDAVTAELRNIAKNRRFDGFRKGKVPMKMVAKMYGKAVRQDILGEVMQRHFIEAIIKEKINPAGAPTFAPVENKEGSDLVFNATFEVYPEVELKGLENITVEKPAVEVKDADVEEMIETLRKQQATWTEVEEAAEAGKRVSIDFVGSIDGEEFEGGKAENFPLEMGAGRMIPGFEDGIEGKTKGMEFEIDVTFPEDYHAENLKGKAAKFAIKVNKVEARQLPELNDEFVAKFGVAEGGIDALKAEVRKNMERELKQAVKNRIKEQAIDGLVKENEIDVPAALIDQEINVLRQQAAQRFGGNVEAAMQLPRELFEEQAKRRVVVGLLLGEVIKAHELKVDEEKVKAIITEMATAYEDPTEVVTYYEQNEQLMNNMRNVALEEQAIDAIIAKAQVSEKEVSFNELMNQPA.

Residues 161 to 246 (GKRVSIDFVG…VNKVEARQLP (86 aa)) form the PPIase FKBP-type domain.

Belongs to the FKBP-type PPIase family. Tig subfamily.

The protein localises to the cytoplasm. The enzyme catalyses [protein]-peptidylproline (omega=180) = [protein]-peptidylproline (omega=0). Its function is as follows. Involved in protein export. Acts as a chaperone by maintaining the newly synthesized protein in an open conformation. Functions as a peptidyl-prolyl cis-trans isomerase. This Vibrio vulnificus (strain CMCP6) protein is Trigger factor.